Consider the following 98-residue polypeptide: NADH-ubiquinone oxidoreductase chain 4L (98 aa).

The next 3 membrane-spanning stretches (helical) occupy residues 1 to 21, 29 to 49, and 61 to 81; these read MSMVYINIFLAFTLSFMGLLI, SLLCLEGMMLSLFVLMTVTIL, and IILLVFAACEAALGLSLLVMV.

Belongs to the complex I subunit 4L family. Core subunit of respiratory chain NADH dehydrogenase (Complex I) which is composed of 45 different subunits.

The protein resides in the mitochondrion inner membrane. It catalyses the reaction a ubiquinone + NADH + 5 H(+)(in) = a ubiquinol + NAD(+) + 4 H(+)(out). In terms of biological role, core subunit of the mitochondrial membrane respiratory chain NADH dehydrogenase (Complex I) which catalyzes electron transfer from NADH through the respiratory chain, using ubiquinone as an electron acceptor. Part of the enzyme membrane arm which is embedded in the lipid bilayer and involved in proton translocation. The protein is NADH-ubiquinone oxidoreductase chain 4L (MT-ND4L) of Taxidea taxus (American badger).